The following is a 255-amino-acid chain: Post-GPI attachment to proteins factor 2 (255 aa).

Transmembrane regions (helical) follow at residues 23–43, 111–131, 143–163, 185–205, and 209–229; these read LALV…IWSL, LGIL…CLSF, NAFV…YLLN, LFLV…RHNS, and AGVY…NMGF.

This sequence belongs to the PGAP2 family.

The protein localises to the golgi apparatus membrane. It localises to the endoplasmic reticulum membrane. Its function is as follows. Involved in the lipid remodeling steps of GPI-anchor maturation. Required for stable expression of GPI-anchored proteins at the cell surface. This is Post-GPI attachment to proteins factor 2 from Drosophila melanogaster (Fruit fly).